A 294-amino-acid polypeptide reads, in one-letter code: Nucleotide-binding protein CLK_2809 (294 aa).

Residue 8–15 participates in ATP binding; the sequence is GLSGAGKT. A GTP-binding site is contributed by 59–62; it reads DIRG.

This sequence belongs to the RapZ-like family.

Functionally, displays ATPase and GTPase activities. This chain is Nucleotide-binding protein CLK_2809, found in Clostridium botulinum (strain Loch Maree / Type A3).